A 467-amino-acid chain; its full sequence is ATP synthase subunit beta (467 aa).

156–163 (GGAGVGKT) contacts ATP.

This sequence belongs to the ATPase alpha/beta chains family. F-type ATPases have 2 components, CF(1) - the catalytic core - and CF(0) - the membrane proton channel. CF(1) has five subunits: alpha(3), beta(3), gamma(1), delta(1), epsilon(1). CF(0) has three main subunits: a(1), b(2) and c(9-12). The alpha and beta chains form an alternating ring which encloses part of the gamma chain. CF(1) is attached to CF(0) by a central stalk formed by the gamma and epsilon chains, while a peripheral stalk is formed by the delta and b chains.

The protein resides in the cell inner membrane. The catalysed reaction is ATP + H2O + 4 H(+)(in) = ADP + phosphate + 5 H(+)(out). Functionally, produces ATP from ADP in the presence of a proton gradient across the membrane. The catalytic sites are hosted primarily by the beta subunits. This is ATP synthase subunit beta from Cupriavidus necator (strain ATCC 17699 / DSM 428 / KCTC 22496 / NCIMB 10442 / H16 / Stanier 337) (Ralstonia eutropha).